Here is a 68-residue protein sequence, read N- to C-terminus: ATP synthase F(0) complex subunit 8 (68 aa).

Residues 8 to 24 (TWFTTILSMFLTLFIIF) form a helical membrane-spanning segment. The residue at position 54 (Lys-54) is an N6-acetyllysine; alternate. Residue Lys-54 is modified to N6-succinyllysine; alternate. Position 57 is an N6-acetyllysine (Lys-57).

Belongs to the ATPase protein 8 family. Component of the ATP synthase complex composed at least of ATP5F1A/subunit alpha, ATP5F1B/subunit beta, ATP5MC1/subunit c (homooctomer), MT-ATP6/subunit a, MT-ATP8/subunit 8, ATP5ME/subunit e, ATP5MF/subunit f, ATP5MG/subunit g, ATP5MK/subunit k, ATP5MJ/subunit j, ATP5F1C/subunit gamma, ATP5F1D/subunit delta, ATP5F1E/subunit epsilon, ATP5PF/subunit F6, ATP5PB/subunit b, ATP5PD/subunit d, ATP5PO/subunit OSCP. ATP synthase complex consists of a soluble F(1) head domain (subunits alpha(3) and beta(3)) - the catalytic core - and a membrane F(0) domain - the membrane proton channel (subunits c, a, 8, e, f, g, k and j). These two domains are linked by a central stalk (subunits gamma, delta, and epsilon) rotating inside the F1 region and a stationary peripheral stalk (subunits F6, b, d, and OSCP). Interacts with PRICKLE3.

It localises to the mitochondrion membrane. In terms of biological role, subunit 8, of the mitochondrial membrane ATP synthase complex (F(1)F(0) ATP synthase or Complex V) that produces ATP from ADP in the presence of a proton gradient across the membrane which is generated by electron transport complexes of the respiratory chain. ATP synthase complex consist of a soluble F(1) head domain - the catalytic core - and a membrane F(1) domain - the membrane proton channel. These two domains are linked by a central stalk rotating inside the F(1) region and a stationary peripheral stalk. During catalysis, ATP synthesis in the catalytic domain of F(1) is coupled via a rotary mechanism of the central stalk subunits to proton translocation. In vivo, can only synthesize ATP although its ATP hydrolase activity can be activated artificially in vitro. Part of the complex F(0) domain. In Hippopotamus amphibius (Hippopotamus), this protein is ATP synthase F(0) complex subunit 8.